Reading from the N-terminus, the 514-residue chain is Histidine ammonia-lyase (514 aa).

Residues 143–145 (CSG) constitute a cross-link (5-imidazolinone (Cys-Gly)). Ser-144 carries the 2,3-didehydroalanine (Ser) modification.

It belongs to the PAL/histidase family. In terms of processing, contains an active site 4-methylidene-imidazol-5-one (MIO), which is formed autocatalytically by cyclization and dehydration of residues Cys-Ser-Gly.

It is found in the cytoplasm. The enzyme catalyses L-histidine = trans-urocanate + NH4(+). Its pathway is amino-acid degradation; L-histidine degradation into L-glutamate; N-formimidoyl-L-glutamate from L-histidine: step 1/3. This is Histidine ammonia-lyase (hutH) from Streptomyces griseus.